The chain runs to 264 residues: Thymidylate synthase (264 aa).

Arg21 provides a ligand contact to dUMP. Residue His51 coordinates (6R)-5,10-methylene-5,6,7,8-tetrahydrofolate. 126-127 (RR) provides a ligand contact to dUMP. Cys146 functions as the Nucleophile in the catalytic mechanism. DUMP-binding positions include 166–169 (RSGD), Asn177, and 207–209 (HLY). Asp169 is a (6R)-5,10-methylene-5,6,7,8-tetrahydrofolate binding site. Ala263 serves as a coordination point for (6R)-5,10-methylene-5,6,7,8-tetrahydrofolate.

The protein belongs to the thymidylate synthase family. Bacterial-type ThyA subfamily. In terms of assembly, homodimer.

The protein localises to the cytoplasm. The enzyme catalyses dUMP + (6R)-5,10-methylene-5,6,7,8-tetrahydrofolate = 7,8-dihydrofolate + dTMP. It participates in pyrimidine metabolism; dTTP biosynthesis. In terms of biological role, catalyzes the reductive methylation of 2'-deoxyuridine-5'-monophosphate (dUMP) to 2'-deoxythymidine-5'-monophosphate (dTMP) while utilizing 5,10-methylenetetrahydrofolate (mTHF) as the methyl donor and reductant in the reaction, yielding dihydrofolate (DHF) as a by-product. This enzymatic reaction provides an intracellular de novo source of dTMP, an essential precursor for DNA biosynthesis. The sequence is that of Thymidylate synthase from Xanthomonas campestris pv. campestris (strain 8004).